We begin with the raw amino-acid sequence, 868 residues long: Dolichyl-phosphooligosaccharide-protein glycotransferase 3 (868 aa).

Over 1-16 (MQNAESWFKKYWHLSV) the chain is Cytoplasmic. A helical membrane pass occupies residues 17 to 36 (LVIAALISVKLRILNPWNSV). Over 37-101 (FTWTVRLGGN…IAGIIFSATS (65 aa)) the chain is Extracellular. The short motif at 45-47 (GND) is the DXD motif 1 element. D47 is a Mn(2+) binding site. An a glycophospholipid-binding site is contributed by H81. A helical membrane pass occupies residues 102-131 (GESLRAVLAFIPAIGGVLAILPVYLLTREV). At 132 to 133 (FD) the chain is on the cytoplasmic side. The chain crosses the membrane as a helical span at residues 134 to 153 (KRAAVIAAFLIAIVPGQFLQ). Residues 154-162 (RSILGFNDH) are Extracellular-facing. A Mn(2+)-binding site is contributed by D161. A DXD motif 2 motif is present at residues 161 to 163 (DHH). H162 serves as a coordination point for a glycophospholipid. Mn(2+) is bound at residue H163. A helical transmembrane segment spans residues 163–184 (HIWEAFWQVSALGTFLLAYNRW). The Cytoplasmic portion of the chain corresponds to 185–199 (KGHDLSHNLTARQMA). The chain crosses the membrane as a helical span at residues 200 to 212 (YPVIAGITIGLYV). Residues 213 to 215 (LSW) are Extracellular-facing. Residues 216 to 238 (GAGFIIAPIILAFMFFAFVLAGF) form a helical membrane-spanning segment. Over 239–241 (VNA) the chain is Cytoplasmic. Residues 242-262 (DRKNLSLVAVVTFAVSALIYL) traverse the membrane as a helical segment. Topologically, residues 263–279 (PFAFNYPGFSTIFYSPF) are extracellular. A helical transmembrane segment spans residues 280-303 (QLLVLLGSAVIAAAFYQIEKWNDV). The Cytoplasmic segment spans residues 304–312 (GFFERVGLG). Residues 313–330 (RKGMPLAVIVLTALIMGL) form a helical membrane-spanning segment. Residues 331-373 (FFVISPDFARNLLSVVRVVQPKGGALTIAEVYPFFFTHNGEFT) lie on the Extracellular side of the membrane. Positions 357-360 (TIAE) match the TIXE motif motif. A helical transmembrane segment spans residues 374–396 (LTNAVLHFGALFFFGMAGILYSA). At 397-404 (YRFLKRRS) the chain is on the cytoplasmic side. The helical transmembrane segment at 405-423 (FPEMALLIWAIAMFIALWG) threads the bilayer. Over 424–427 (QNRF) the chain is Extracellular. R426 provides a ligand contact to a glycophospholipid. The chain crosses the membrane as a helical span at residues 428 to 452 (AYYFAAVSAVYSALALSVVFDKLHL). The Cytoplasmic portion of the chain corresponds to 453–468 (YRALENAIGARNKLSY). Residues 469 to 494 (FRVAFALLIALAAIYPTYILADAQSS) traverse the membrane as a helical segment. Topologically, residues 495–868 (YAGGPNKQWY…QNGEIIQLDL (374 aa)) are extracellular. The interval 550-552 (WWD) is interacts with target acceptor peptide in protein substrate. The WWDYG motif signature appears at 550 to 554 (WWDYG). Residues 613-622 (EMETGKYYAM) carry the DKi motif motif.

Belongs to the STT3 family. Requires Mg(2+) as cofactor. The cofactor is Mn(2+). It depends on Zn(2+) as a cofactor.

It is found in the cell membrane. The enzyme catalyses an archaeal dolichyl phosphooligosaccharide + [protein]-L-asparagine = an archaeal dolichyl phosphate + a glycoprotein with the oligosaccharide chain attached by N-beta-D-glycosyl linkage to a protein L-asparagine.. It participates in protein modification; protein glycosylation. Functionally, oligosaccharyl transferase (OST) that catalyzes the initial transfer of a defined glycan (a glucose-linked heptasaccharide composed of 3 Glc, 2 Man, 2 Gal and a sulfate for A.fulgidus AglB-L) from the lipid carrier dolichol-monophosphate to an asparagine residue within an Asn-X-Ser/Thr consensus motif in nascent polypeptide chains, the first step in protein N-glycosylation. In Archaeoglobus fulgidus (strain ATCC 49558 / DSM 4304 / JCM 9628 / NBRC 100126 / VC-16), this protein is Dolichyl-phosphooligosaccharide-protein glycotransferase 3 (aglB3).